Here is a 215-residue protein sequence, read N- to C-terminus: Protein-L-isoaspartate O-methyltransferase (215 aa).

Residue S62 is part of the active site.

This sequence belongs to the methyltransferase superfamily. L-isoaspartyl/D-aspartyl protein methyltransferase family.

The protein resides in the cytoplasm. It carries out the reaction [protein]-L-isoaspartate + S-adenosyl-L-methionine = [protein]-L-isoaspartate alpha-methyl ester + S-adenosyl-L-homocysteine. Functionally, catalyzes the methyl esterification of L-isoaspartyl residues in peptides and proteins that result from spontaneous decomposition of normal L-aspartyl and L-asparaginyl residues. It plays a role in the repair and/or degradation of damaged proteins. This chain is Protein-L-isoaspartate O-methyltransferase, found in Ruegeria pomeroyi (strain ATCC 700808 / DSM 15171 / DSS-3) (Silicibacter pomeroyi).